The chain runs to 101 residues: Urease subunit gamma (101 aa).

This sequence belongs to the urease gamma subunit family. As to quaternary structure, heterotrimer of UreA (gamma), UreB (beta) and UreC (alpha) subunits. Three heterotrimers associate to form the active enzyme.

It localises to the cytoplasm. It carries out the reaction urea + 2 H2O + H(+) = hydrogencarbonate + 2 NH4(+). Its pathway is nitrogen metabolism; urea degradation; CO(2) and NH(3) from urea (urease route): step 1/1. The sequence is that of Urease subunit gamma from Ureaplasma urealyticum (Ureaplasma urealyticum biotype 2).